Consider the following 208-residue polypeptide: GTP-binding protein YPTM1 (208 aa).

GTP contacts are provided by residues 15 to 23 (GDSSVGKSC), 33 to 40 (YVDSYIST), 63 to 67 (DTAGQ), 121 to 124 (NKCD), and 151 to 153 (SAK). An Effector region motif is present at residues 37–45 (YISTIGVDF). Residues 189–208 (QMKGRPIQQEQQKSSRCCST) are disordered. Polar residues predominate over residues 196–208 (QQEQQKSSRCCST). S-geranylgeranyl cysteine attachment occurs at residues Cys205 and Cys206.

It belongs to the small GTPase superfamily. Rab family. In terms of tissue distribution, low levels in coleoptiles.

The protein resides in the cell membrane. Functionally, protein transport. Probably involved in vesicular traffic. This chain is GTP-binding protein YPTM1 (YPTM1), found in Zea mays (Maize).